The chain runs to 565 residues: DNA ligase B (565 aa).

The N6-AMP-lysine intermediate role is filled by lysine 130.

Belongs to the NAD-dependent DNA ligase family. LigB subfamily.

The catalysed reaction is NAD(+) + (deoxyribonucleotide)n-3'-hydroxyl + 5'-phospho-(deoxyribonucleotide)m = (deoxyribonucleotide)n+m + AMP + beta-nicotinamide D-nucleotide.. Its function is as follows. Catalyzes the formation of phosphodiester linkages between 5'-phosphoryl and 3'-hydroxyl groups in double-stranded DNA using NAD as a coenzyme and as the energy source for the reaction. This is DNA ligase B from Yersinia enterocolitica serotype O:8 / biotype 1B (strain NCTC 13174 / 8081).